The sequence spans 382 residues: Protein RecA (382 aa).

Residues 1–20 (MPADVKAAQSSAGDSRPGER) form a disordered region. 79–86 (GPESSGKT) is a binding site for ATP. Positions 360–369 (SAAAKPSAKT) are enriched in low complexity. The segment at 360–382 (SAAAKPSAKTADTDKKLVADGAA) is disordered. A compositionally biased stretch (basic and acidic residues) spans 370-382 (ADTDKKLVADGAA).

This sequence belongs to the RecA family.

Its subcellular location is the cytoplasm. In terms of biological role, can catalyze the hydrolysis of ATP in the presence of single-stranded DNA, the ATP-dependent uptake of single-stranded DNA by duplex DNA, and the ATP-dependent hybridization of homologous single-stranded DNAs. It interacts with LexA causing its activation and leading to its autocatalytic cleavage. In Synechococcus sp. (strain CC9311), this protein is Protein RecA.